Here is a 137-residue protein sequence, read N- to C-terminus: Probable calcium-binding protein CML33 (137 aa).

EF-hand domains lie at methionine 1–serine 36, isoleucine 37–serine 72, aspartate 76–lysine 111, and cysteine 112–valine 137. Aspartate 14, serine 16, aspartate 18, lysine 20, and glutamate 25 together coordinate Ca(2+). Residues aspartate 89, asparagine 91, aspartate 93, lysine 95, and glutamate 100 each coordinate Ca(2+).

In terms of biological role, potential calcium sensor. In Arabidopsis thaliana (Mouse-ear cress), this protein is Probable calcium-binding protein CML33 (CML33).